The following is a 368-amino-acid chain: 1-deoxy-D-xylulose 5-phosphate reductoisomerase (368 aa).

Residues T7, G8, S9, I10, G31, K32, N33, and N113 each coordinate NADPH. K114 is a binding site for 1-deoxy-D-xylulose 5-phosphate. E115 serves as a coordination point for NADPH. Mn(2+) is bound at residue D133. 1-deoxy-D-xylulose 5-phosphate contacts are provided by S134, E135, S158, and H181. A Mn(2+)-binding site is contributed by E135. Residue G187 participates in NADPH binding. The 1-deoxy-D-xylulose 5-phosphate site is built by S194, N199, K200, and E203. E203 provides a ligand contact to Mn(2+).

Belongs to the DXR family. Requires Mg(2+) as cofactor. Mn(2+) serves as cofactor.

The enzyme catalyses 2-C-methyl-D-erythritol 4-phosphate + NADP(+) = 1-deoxy-D-xylulose 5-phosphate + NADPH + H(+). It participates in isoprenoid biosynthesis; isopentenyl diphosphate biosynthesis via DXP pathway; isopentenyl diphosphate from 1-deoxy-D-xylulose 5-phosphate: step 1/6. Its function is as follows. Catalyzes the NADPH-dependent rearrangement and reduction of 1-deoxy-D-xylulose-5-phosphate (DXP) to 2-C-methyl-D-erythritol 4-phosphate (MEP). The sequence is that of 1-deoxy-D-xylulose 5-phosphate reductoisomerase from Helicobacter pylori (strain ATCC 700392 / 26695) (Campylobacter pylori).